Here is a 156-residue protein sequence, read N- to C-terminus: Proline dehydrogenase transcriptional activator (156 aa).

The HTH asnC-type domain occupies 10–71 (LDHFDLKILE…VLNPQKLGVD (62 aa)). Positions 29-48 (VLQLSKRVGLSKTPCQTRLK) form a DNA-binding region, H-T-H motif.

Functionally, transcriptional activator of the putA gene in response to proline. The sequence is that of Proline dehydrogenase transcriptional activator (putR) from Rhizobium radiobacter (Agrobacterium tumefaciens).